The primary structure comprises 360 residues: MYDYILNALVKIEAYLDNESDSVEIPNNLFKTDILVDYYYYPGHFVDVDDDEKELIAATLTDAGYADHYDALAELLWKANIEPIPKEELVDGNSYCFIMISFGITPVQAHLKAKKAKYEQVTFFCLPYTDREGEQRFKILVVPNTFGSIFKEMKCACLLDIESEEQLDKTYWSLLERAIGQICQTLSIDVTGFALSDTTYQQKTLETYSPYLTQFCQLTQIQNIEGFKARWLEIQQQQKQLIQQVKDEGFYGTVKPAFLNYRFLLCEFLTSTYEDHWQMDYDALFDYLAKYLEQPFELDEEDGLQPNDIARKVEAESNYSLLDIETRLESYCFLPCLKTDVESILNLAEILDFPMSKLGD.

The protein to P.multocida PM1082.

This is an uncharacterized protein from Pasteurella multocida (strain Pm70).